The primary structure comprises 499 residues: MSNLPWLTIIVILPISAGLLIPLFPHKGNKMIRWYTLGICLLDLLLMTYIFRYHYHFDNSLIQLEEDYNWINLIHFHWKLGIDGFSIGLILLTGFVTTLATLAAWPVTRNPRLLHFLMLAMYSGQLGLFASRDILLFFLMWELELIPVYLLLSMWGGKRRLYSATKFLLYTAGGSIFILMGALSMGLYGSHGPTFDFELLAKKDYPITLEILLYLGFLIAYAIKLPIFPLHTWLPDTHGEAHYSTCMLLAGVLLKMGGYGLIRINMELLPHAHSLFSPWLIIIGAVQIIYAALTSMGQRNLKRRIAYSSISHMGFVIIGIGSMTYTGLNGAILQMISHGLIGAALFFLVGTSYDRIRTLFLDEMGGIAIPIPKIFTMFSSFSMASLALPGMSGFVAEFMIFLGVITNHKYSSTFRIIITAIAAIGMILTPIYLLSMLRRMFYGYKVLNVPNPYFKDSGPRELFILICLFLPIIGIGLYPDLVLFLYNAKVEAIFSQSFY.

Transmembrane regions (helical) follow at residues 4-24, 31-51, 87-107, 113-130, 134-154, 167-187, 211-231, 242-262, 274-294, 305-325, 330-350, 386-406, 416-436, and 462-482; these read LPWL…IPLF, MIRW…TYIF, IGLI…AWPV, LLHF…GLFA, ILLF…LLSM, FLLY…SMGL, ILLY…FPLH, HYST…YGLI, SLFS…AALT, IAYS…SMTY, GAIL…FLVG, LALP…GVIT, IIIT…LLSM, and LFIL…PDLV.

This sequence belongs to the complex I subunit 4 family.

The protein resides in the plastid. Its subcellular location is the chloroplast thylakoid membrane. It catalyses the reaction a plastoquinone + NADH + (n+1) H(+)(in) = a plastoquinol + NAD(+) + n H(+)(out). The enzyme catalyses a plastoquinone + NADPH + (n+1) H(+)(in) = a plastoquinol + NADP(+) + n H(+)(out). In Cryptomeria japonica (Japanese cedar), this protein is NAD(P)H-quinone oxidoreductase chain 4, chloroplastic.